A 6753-amino-acid chain; its full sequence is Putative histone-lysine N-methyltransferase 1 (6753 aa).

6 disordered regions span residues 1–28, 418–458, 470–522, 736–1024, 1487–1545, and 1557–1642; these read MSENSDEGKMQKGKGNEMNEDKIICKKE, FGNM…GKKN, DTTL…CNPS, DDDE…KKDK, FNNN…NTAT, and YKKV…GKSK. The span at 435 to 449 shows a compositional bias: low complexity; it reads NNTSKNNISNNNNNM. Positions 475–502 are enriched in basic and acidic residues; sequence QAKKESIKTVSKNERKNNMNKHSHDNKV. Basic residues predominate over residues 504-516; it reads KLNKRMSNKRRNN. A compositionally biased stretch (basic and acidic residues) spans 739–794; it reads ECKKENKDNISESSKRSNNIGEKKMLHVEKSEEHDDMTSDSNKEDTKIEEGRKKSN. Acidic residues predominate over residues 798 to 808; sequence IDVDDGEEEEN. Low complexity predominate over residues 809-833; it reads VNNNDNNNDNNNDNDNSSDNNNNDD. Basic and acidic residues-rich tracts occupy residues 853-866 and 885-900; these read EKKDVKENTDDKNL and IKKDNDKKKKYEKKNI. Over residues 912–932 the composition is skewed to low complexity; it reads RSNSSSTSTSNSSSKSKSSNC. Basic and acidic residues-rich tracts occupy residues 945 to 955 and 964 to 975; these read KMDEKNSEQKK and TCNEGKSKKDST. Basic residues-rich tracts occupy residues 1002 to 1019 and 1492 to 1506; these read EKKKKINNSKINKGRKGI and KNKRTKNGKKKKNTI. The segment covering 1522–1533 has biased composition (low complexity); sequence SNSHSIEVSSSE. The span at 1566 to 1599 shows a compositional bias: basic and acidic residues; it reads KNGENKNGENKNGDIKNDDIKNDDIKNDDIRNDD. Residues 1615-1632 are compositionally biased toward low complexity; sequence ESNNIDNNNSSNDSLSDV. 3 PHD-type zinc fingers span residues 1671–1728, 1761–1819, and 2510–2579; these read CYRC…CLKC, KNFC…CSIG, and KECC…CIKC. The RING-type; degenerate zinc finger occupies 1764-1817; sequence CIMCNEKYDEDDSKKWVQCDVCKFWIHLSCDKNESRNIETLSNKNIDYKCPTCS. One can recognise a Bromo domain in the interval 1816 to 1919; sequence CSIGTFHDKI…KKGRVIIKNM (104 aa). Over residues 2694-2705 the composition is skewed to basic and acidic residues; it reads ECNKNEKKKNDN. 5 disordered regions span residues 2694-2768, 3053-3072, 4182-4254, 4295-4349, and 5331-5460; these read ECNK…KDTK, EMESNNNNNNNNNNSDCNNN, NEQN…LKTT, ENDE…ENEK, and NMNM…NNDK. Low complexity predominate over residues 2720–2735; it reads NNNNNNNGDDNNNIDN. Positions 2758–2768 are enriched in basic and acidic residues; that stretch reads NEEKKNNKDTK. The span at 3057–3072 shows a compositional bias: low complexity; that stretch reads NNNNNNNNNNSDCNNN. Composition is skewed to basic and acidic residues over residues 4212–4223, 4239–4254, and 4297–4321; these read SKKDMLIKKEMN, SPKKDDELRENDLKTT, and DENKEKGIKKEKNDEEKKNDAEKKK. Over residues 4322-4338 the composition is skewed to basic residues; sequence KENKKGREKSVKVRKTK. Low complexity-rich tracts occupy residues 5331–5340 and 5348–5400; these read NMNMLDNNMN and ENNN…NNNN. The segment covering 5401-5411 has biased composition (basic residues); sequence KSKKNTQKKKD. Over residues 5416 to 5426 the composition is skewed to low complexity; sequence VKINQNNSNNK. A compositionally biased stretch (basic and acidic residues) spans 5434–5460; sequence SKDNEELKSDNTKNNKTKDSDGNNNDK. Residues 5496–5532 form a C2HC pre-PHD-type; degenerate zinc finger; sequence YMKEKKCKNKEKNRGSKNNNIKNIKLIDMCEWKEDRN. The PHD-type 4; degenerate zinc-finger motif lies at 5558–5610; it reads STCFLCGYNNASVYCSNEDCNVKFHLNCAFYSTVIKDPSNNPFFRYLKCFNLV. Residues 5905–5952 are compositionally biased toward low complexity; the sequence is NDNNNDINNNDNNNNENNNENINDNNNNNNNNNNNNNNNNSNNNNNNN. 3 disordered regions span residues 5905 to 5958, 6103 to 6133, and 6212 to 6235; these read NDNN…YYHN, DCSNEENNTSDDEENENRKNENDDDNIPEHI, and KFSDNKNYASDDEEKKKKKRKNQT. Residues 6118–6133 show a composition bias toward basic and acidic residues; sequence ENRKNENDDDNIPEHI. The SET domain maps to 6612-6729; sequence LRLYVKKSSI…AHEEITYDYQ (118 aa). The Post-SET domain maps to 6737 to 6753; sequence KKLICLCGSSTCLGRMN.

The protein belongs to the class V-like SAM-binding methyltransferase superfamily.

The catalysed reaction is L-lysyl-[histone] + S-adenosyl-L-methionine = N(6)-methyl-L-lysyl-[histone] + S-adenosyl-L-homocysteine + H(+). In terms of biological role, probable histone methyltransferase. The chain is Putative histone-lysine N-methyltransferase 1 (SET1) from Plasmodium falciparum (isolate 3D7).